Reading from the N-terminus, the 526-residue chain is MRQRITYIQKPSLPFHPSQTTLTRDSLYVESLDAAREERVTFSFDELPSELWQVLRQCHQLHIRWASERAFEAVSPLSSRISPGLHVFYSPVEAGRAKRDSEGREPLCTLLKKVFDDELRCESPEKSFITPPILSKRFASTTAYQFYELLPSLGNLVTYIQQKFCGTDDKCHQRAASILSADSVDINYDSISHALTMSGFWSQAPGEQGWTETIGKHEGGTDKVEIGLLGAEPASEPEEIKVGGLLAVVGQDEELKPTLFSFPSRHHPLHEDATYSVTFPPPTGLHPTMTISIAPEALKEPPRRPDATCALHAYLTLPSKLFGDKYQLSTTDPLFLKSHNLASLRAVAGETDLEAPDWSISRWGSNWLLELASPSESDEVAEEWNITIPLHLRYLPPSESGYQPASVPWPVVFWACSAEDGTKMGVNPFDRINLGWEGLFGPRTMFYQLHPSPSPEGGNLVEELEVPVLTLKENSGIFNSQVIELGTFAVISIGFLWVLWKLGLVARSSGIRPQHQRNPGKRDKAE.

At 1–484 (MRQRITYIQK…SGIFNSQVIE (484 aa)) the chain is on the lumenal side. N-linked (GlcNAc...) asparagine glycosylation is present at N385. A helical transmembrane segment spans residues 485 to 505 (LGTFAVISIGFLWVLWKLGLV). Over 506 to 526 (ARSSGIRPQHQRNPGKRDKAE) the chain is Cytoplasmic.

The protein belongs to the PIGX family.

It is found in the endoplasmic reticulum membrane. It functions in the pathway glycolipid biosynthesis; glycosylphosphatidylinositol-anchor biosynthesis. Required for proper folding and/or the stability of a subset of proteins in the endoplasmic reticulum. Component of glycosylphosphatidylinositol-mannosyltransferase 1 which transfers the first of the 4 mannoses in the GPI-anchor precursors during GPI-anchor biosynthesis. Probably acts by stabilizing the mannosyltransferase gpi14. This chain is Protein pbn1 (pbn1), found in Emericella nidulans (strain FGSC A4 / ATCC 38163 / CBS 112.46 / NRRL 194 / M139) (Aspergillus nidulans).